Consider the following 150-residue polypeptide: uncharacterized protein (150 aa).

The 143-residue stretch at 3 to 145 folds into the Flavodoxin-like domain; that stretch reads VAILSGSVYG…DAEPWLAEFA (143 aa).

The protein belongs to the flavodoxin family. MioC subfamily. FMN serves as cofactor.

Functionally, probable electron transporter. This is an uncharacterized protein from Pseudomonas aeruginosa (strain ATCC 15692 / DSM 22644 / CIP 104116 / JCM 14847 / LMG 12228 / 1C / PRS 101 / PAO1).